A 437-amino-acid chain; its full sequence is Sodium/bile acid cotransporter 4 (437 aa).

Topologically, residues 1–103 (MDGNDNVTLL…LPFWDTPLNH (103 aa)) are extracellular. N-linked (GlcNAc...) asparagine glycans are attached at residues asparagine 6, asparagine 18, and asparagine 24. Residues 37–82 (APASSAGPGPGLSLGPGPSFGFSPGPTPTPEPTTSGLAGGAASHGP) form a disordered region. The span at 51 to 60 (GPGPSFGFSP) shows a compositional bias: low complexity. The helical transmembrane segment at 104–124 (GLNVFVGAALCITMLGLGCTV) threads the bilayer. At 125-140 (DVNHFGAHVRRPVGAL) the chain is on the cytoplasmic side. Residues 141-161 (LAALCQFGLLPLLAFLLALAF) form a helical membrane-spanning segment. The Extracellular portion of the chain corresponds to 162–197 (KLDEVAAVAVLLCGCCPGGNLSNLMSLLVDGDMNLS). Residues asparagine 181 and asparagine 195 are each glycosylated (N-linked (GlcNAc...) asparagine). Residues 198 to 218 (IIMTISSTLLALVLMPLCLWI) form a helical membrane-spanning segment. The Cytoplasmic segment spans residues 219 to 233 (YSWAWINTPIVQLLP). Residues 234-254 (LGTVTLTLCSTLIPIGLGVFI) traverse the membrane as a helical segment. At 255-267 (RYKYSRVADYIVK) the chain is on the extracellular side. The chain crosses the membrane as a helical span at residues 268–288 (VSLWSLLVTLVVLFIMTGTML). Residues 289–291 (GPE) are Cytoplasmic-facing. A helical transmembrane segment spans residues 292–312 (LLASIPAAVYVIAIFMPLAGY). Residues 313–360 (ASGYGLATLFHLPPNCKRTVCLETGSQNVQLCTAILKLAFPPQFIGSM) lie on the Extracellular side of the membrane. A helical transmembrane segment spans residues 361 to 381 (YMFPLLYALFQSAEAGIFVLI). At 382-437 (YKMYGSEMLHKRDPLDEDEDTDISYKKLKEEEMADTSYGTVKAENIIMMETAQTSL) the chain is on the cytoplasmic side.

Belongs to the bile acid:sodium symporter (BASS) (TC 2.A.28) family. Post-translationally, activated following N-terminal proteolytic cleavage by thrombin and/or proteases. Highly expressed in brain and small intestine, and moderately expressed in colon, heart, prostate, and testis. Very low levels were detected in kidney, liver, ovary, placenta, spleen, and thymus.

Its subcellular location is the cell membrane. Its function is as follows. Transporter for bile acids. The polypeptide is Sodium/bile acid cotransporter 4 (SLC10A4) (Homo sapiens (Human)).